The sequence spans 145 residues: uncharacterized protein (145 aa).

It belongs to the asfivirus K145R family.

Its subcellular location is the virion. This is an uncharacterized protein from African swine fever virus (isolate Tick/South Africa/Pretoriuskop Pr4/1996) (ASFV).